A 102-amino-acid chain; its full sequence is Large ribosomal subunit protein uL24 (102 aa).

The protein belongs to the universal ribosomal protein uL24 family. Part of the 50S ribosomal subunit.

In terms of biological role, one of two assembly initiator proteins, it binds directly to the 5'-end of the 23S rRNA, where it nucleates assembly of the 50S subunit. One of the proteins that surrounds the polypeptide exit tunnel on the outside of the subunit. The sequence is that of Large ribosomal subunit protein uL24 from Cupriavidus pinatubonensis (strain JMP 134 / LMG 1197) (Cupriavidus necator (strain JMP 134)).